A 376-amino-acid polypeptide reads, in one-letter code: Probable transcription factor At1g61730 (376 aa).

The tract at residues 1–150 (MTKKLNPLED…RVKKDEESVK (150 aa)) is disordered. Acidic residues predominate over residues 17-40 (SDEDDVETSEAGEASDDSSSSEED). Serine 49 bears the Phosphoserine mark. The segment covering 49–72 (SPSATTAAAPPAKSTAVSTAADSD) has biased composition (low complexity). The segment covering 73-83 (SGSETETDSDS) has biased composition (acidic residues). Residues 87–103 (NPPNSGSGKTIALNTVN) are compositionally biased toward polar residues.

Belongs to the GeBP family. In terms of assembly, interacts with DEK3.

The protein is Probable transcription factor At1g61730 of Arabidopsis thaliana (Mouse-ear cress).